Consider the following 325-residue polypeptide: 5-dehydro-2-deoxygluconokinase (325 aa).

The protein belongs to the carbohydrate kinase PfkB family.

The enzyme catalyses 5-dehydro-2-deoxy-D-gluconate + ATP = 6-phospho-5-dehydro-2-deoxy-D-gluconate + ADP + H(+). Its pathway is polyol metabolism; myo-inositol degradation into acetyl-CoA; acetyl-CoA from myo-inositol: step 5/7. Functionally, catalyzes the phosphorylation of 5-dehydro-2-deoxy-D-gluconate (2-deoxy-5-keto-D-gluconate or DKG) to 6-phospho-5-dehydro-2-deoxy-D-gluconate (DKGP). The polypeptide is 5-dehydro-2-deoxygluconokinase (Listeria monocytogenes serotype 4a (strain HCC23)).